The primary structure comprises 280 residues: Ribosomal RNA large subunit methyltransferase J (280 aa).

S-adenosyl-L-methionine is bound by residues histidine 19, histidine 42, serine 100, glutamate 118, 143–144 (DG), and aspartate 164. Residue aspartate 164 is the Proton acceptor of the active site.

The protein belongs to the RlmJ family. As to quaternary structure, monomer.

It carries out the reaction adenosine(2030) in 23S rRNA + S-adenosyl-L-methionine = N(6)-methyladenosine(2030) in 23S rRNA + S-adenosyl-L-homocysteine + H(+). Functionally, specifically methylates the adenine in position 2030 of 23S rRNA. Nascent 23S rRNA seems to be the natural substrate. Appears to be not necessary for ribosome assembly. Required for the utilization of extracellular DNA as the sole source of carbon and energy. This chain is Ribosomal RNA large subunit methyltransferase J, found in Escherichia coli (strain K12).